Consider the following 75-residue polypeptide: Exodeoxyribonuclease 7 small subunit (75 aa).

This sequence belongs to the XseB family. Heterooligomer composed of large and small subunits.

The protein localises to the cytoplasm. It catalyses the reaction Exonucleolytic cleavage in either 5'- to 3'- or 3'- to 5'-direction to yield nucleoside 5'-phosphates.. In terms of biological role, bidirectionally degrades single-stranded DNA into large acid-insoluble oligonucleotides, which are then degraded further into small acid-soluble oligonucleotides. This is Exodeoxyribonuclease 7 small subunit from Elusimicrobium minutum (strain Pei191).